The chain runs to 516 residues: Solute carrier family 49 member A3 (516 aa).

Residues 1 to 10 show a composition bias toward basic and acidic residues; the sequence is MAGTMDRLED. A disordered region spans residues 1–22; it reads MAGTMDRLEDCNSPETSGTAGD. Transmembrane regions (helical) follow at residues 34–54, 74–94, 104–124, 139–159, 170–190, 199–219, 253–273, 289–309, 321–341, 344–364, 382–402, and 425–445; these read WVFL…WLSF, WLSL…IWVL, ILGA…CLPV, LCAL…ALWF, ISTM…PALV, MLGI…VCLW, VLLA…SALL, LCGA…GLYV, IGLC…QLQG, LALA…APVV, GLIF…LTAL, and VSLL…VIFF. A disordered region spans residues 453–516; it reads EAESGGSSSP…EWAETMPRDV (64 aa). Residues 504–516 show a composition bias toward basic and acidic residues; the sequence is GHSEWAETMPRDV.

The protein belongs to the major facilitator superfamily.

It is found in the membrane. The chain is Solute carrier family 49 member A3 (Slc49a3) from Mus musculus (Mouse).